The chain runs to 355 residues: Phosphatidylinositol:ceramide inositolphosphotransferase (355 aa).

Residues 1 to 44 (MISYPFFSLSPPGLVPPPMAVPPVEMYSGSFWNRMRKPLPLRTQ) are Cytoplasmic-facing. The chain crosses the membrane as a helical span at residues 45 to 65 (VIRFTVVFVIVSFILAVALQI). Over 66 to 89 (THERMPDPKVTKPLPDLGFELLTK) the chain is Extracellular. The chain crosses the membrane as a helical span at residues 90-110 (ISFLSVVTDVLIAFLSSLSFF). The Cytoplasmic segment spans residues 111–165 (TLWKLYLLHRHCVGSGEPELPCNIPGVSRFFLSVWLCKENCRIELRNVHTIAWIR). A helical transmembrane segment spans residues 166 to 186 (FITSYALLLLFRSLVIVMTSM). Residues 187–205 (PTPVDKCQNPPKIENPVKN) are Extracellular-facing. A helical membrane pass occupies residues 206 to 226 (VILTVLTAGGGSIHCGDLMYS). The Cytoplasmic portion of the chain corresponds to 227 to 251 (GHTVILTLHLMFHWIYGAMVHWSFR). Active-site residues include His228, His271, and Asp275. Residues 252–272 (PVVTVVAIFGYYCIVASRSHY) form a helical membrane-spanning segment. The Extracellular segment spans residues 273–275 (TDD). The helical transmembrane segment at 276–296 (VLVAIYLTIATFIAVGHNADG) threads the bilayer. Topologically, residues 297–355 (APWQLQLFIRWLPCCGANSREVTEDSQPVMVAFKSEAVDELRERDDSAGLSCEVSTNEV) are cytoplasmic.

This sequence belongs to the sphingomyelin synthase family.

Its subcellular location is the membrane. Its function is as follows. Bidirectional lipid inositolphosphotransferase capable of converting phosphatidylinositol (PI) and ceramide to inositol-phosphorylceramide (IPC) and diacylglycerol (DAG) and vice versa. Direction is dependent on the relative concentrations of DAG and ceramide as phosphoinositol acceptors. Does not function strictly as a SM synthase. Essential for viability of the pathogenic bloodstream stage of this human protozoan parasite and, consequently, can be considered as potential drug target. The protein is Phosphatidylinositol:ceramide inositolphosphotransferase of Trypanosoma brucei brucei (strain 927/4 GUTat10.1).